A 368-amino-acid polypeptide reads, in one-letter code: 1-deoxy-D-xylulose 5-phosphate reductoisomerase (368 aa).

The NADPH site is built by threonine 7, glycine 8, serine 9, isoleucine 10, glycine 31, lysine 32, asparagine 33, and asparagine 113. Lysine 114 contributes to the 1-deoxy-D-xylulose 5-phosphate binding site. Residue glutamate 115 coordinates NADPH. Aspartate 133 contributes to the Mn(2+) binding site. 1-deoxy-D-xylulose 5-phosphate is bound by residues serine 134, glutamate 135, serine 158, and histidine 181. Residue glutamate 135 participates in Mn(2+) binding. Glycine 187 lines the NADPH pocket. The 1-deoxy-D-xylulose 5-phosphate site is built by serine 194, asparagine 199, lysine 200, and glutamate 203. Mn(2+) is bound at residue glutamate 203.

It belongs to the DXR family. The cofactor is Mg(2+). Mn(2+) serves as cofactor.

It carries out the reaction 2-C-methyl-D-erythritol 4-phosphate + NADP(+) = 1-deoxy-D-xylulose 5-phosphate + NADPH + H(+). Its pathway is isoprenoid biosynthesis; isopentenyl diphosphate biosynthesis via DXP pathway; isopentenyl diphosphate from 1-deoxy-D-xylulose 5-phosphate: step 1/6. Its function is as follows. Catalyzes the NADPH-dependent rearrangement and reduction of 1-deoxy-D-xylulose-5-phosphate (DXP) to 2-C-methyl-D-erythritol 4-phosphate (MEP). This Helicobacter pylori (strain J99 / ATCC 700824) (Campylobacter pylori J99) protein is 1-deoxy-D-xylulose 5-phosphate reductoisomerase.